A 543-amino-acid polypeptide reads, in one-letter code: Protein phosphatase 1G (543 aa).

Glycine 2 carries the N-myristoyl glycine lipid modification. At arginine 22 the chain carries Omega-N-methylarginine. Residues 26 to 503 (PYGFSAMQGW…DNMTCIIICF (478 aa)) enclose the PPM-type phosphatase domain. The Mn(2+) site is built by aspartate 60 and glycine 61. Disordered regions lie at residues 116 to 139 (QIAG…DVDN) and 163 to 326 (NCHK…SDSG). Residue threonine 122 is modified to Phosphothreonine. Acidic residues predominate over residues 123–139 (EDEDEKEKVADEDDVDN). Position 183 is a phosphoserine (serine 183). Residues 259-310 (DSEDESDEAEEEEEDSEECSEEEDGYSSEEAENEEDEDDTEEAEEDDEEEEM) are compositionally biased toward acidic residues. Position 381 is an N6-acetyllysine (lysine 381). Positions 439 and 494 each coordinate Mn(2+). A disordered region spans residues 508-543 (TAAPQPESGKRKLEEVLSTEGAEENGNSDKKKAKRD). Serine 525 is subject to Phosphoserine.

It belongs to the PP2C family. Interacts with NOL3; may dephosphorylate NOL3. Requires Mg(2+) as cofactor. Mn(2+) serves as cofactor.

It localises to the cytoplasm. Its subcellular location is the membrane. It carries out the reaction O-phospho-L-seryl-[protein] + H2O = L-seryl-[protein] + phosphate. It catalyses the reaction O-phospho-L-threonyl-[protein] + H2O = L-threonyl-[protein] + phosphate. This Bos taurus (Bovine) protein is Protein phosphatase 1G (PPM1G).